Here is a 445-residue protein sequence, read N- to C-terminus: MSTILKSLPKGENVGIAFSGGLDTSAALLWMKQKGARVFAYTANLGQPDEADYDEIPRKALEFGAEKARLVDCRTQLVHEGIAAIQSGAFHVSTGGIAYFNTTPLGRAVTGTMLVSAMKEDGVNIWGDGSTYKGNDIERFYRYGLLTNPELRIYKPWLDQQFIDELGGRAEMSAFMTAHGFAYKMSAEKAYSTDSNILGATHEAKDLEHLDSGIKIVNPIMGVPFWRDDCAVKAEKVSVRFEEGQPVALNGQTFTDPVALFLEANTIGGRHGLGMSDQIENRIIEAKSRGIYEAPAMALLHIAYERLVTGIHNEDTIEQYRISGMRLGRLLYQGRWFDSQALMLRETAQRWVARAITGEVTLELRRGNDYSILNTESPNLTYAPERLSMEKVEDAAFTPGDRIGQLTMRNLDISDTRRKLNLYTQTGLLSAEQGSHIPRLDNDKS.

ATP contacts are provided by residues 17–25 and Ala-43; that span reads AFSGGLDTS. Tyr-99 contributes to the L-citrulline binding site. ATP is bound by residues Gly-129 and Thr-131. L-aspartate-binding residues include Thr-131, Asn-135, and Asp-136. L-citrulline is bound at residue Asn-135. Asp-136 is an ATP binding site. L-citrulline contacts are provided by Arg-139 and Ser-192. ATP is bound at residue Asp-194. Residues Thr-201, Glu-203, and Glu-280 each contribute to the L-citrulline site.

This sequence belongs to the argininosuccinate synthase family. Type 2 subfamily. As to quaternary structure, homotetramer.

Its subcellular location is the cytoplasm. The catalysed reaction is L-citrulline + L-aspartate + ATP = 2-(N(omega)-L-arginino)succinate + AMP + diphosphate + H(+). The protein operates within amino-acid biosynthesis; L-arginine biosynthesis; L-arginine from L-ornithine and carbamoyl phosphate: step 2/3. The sequence is that of Argininosuccinate synthase from Afipia carboxidovorans (strain ATCC 49405 / DSM 1227 / KCTC 32145 / OM5) (Oligotropha carboxidovorans).